The primary structure comprises 358 residues: Histidinol-phosphate aminotransferase (358 aa).

Position 217 is an N6-(pyridoxal phosphate)lysine (Lys217).

Belongs to the class-II pyridoxal-phosphate-dependent aminotransferase family. Histidinol-phosphate aminotransferase subfamily. In terms of assembly, homodimer. Pyridoxal 5'-phosphate is required as a cofactor.

It catalyses the reaction L-histidinol phosphate + 2-oxoglutarate = 3-(imidazol-4-yl)-2-oxopropyl phosphate + L-glutamate. It participates in amino-acid biosynthesis; L-histidine biosynthesis; L-histidine from 5-phospho-alpha-D-ribose 1-diphosphate: step 7/9. This Ruminiclostridium cellulolyticum (strain ATCC 35319 / DSM 5812 / JCM 6584 / H10) (Clostridium cellulolyticum) protein is Histidinol-phosphate aminotransferase.